The chain runs to 100 residues: NADH-quinone oxidoreductase subunit K (100 aa).

3 helical membrane passes run 4 to 24 (LSYS…GIMI), 29 to 49 (LFLL…FVIV), and 60 to 80 (VMYI…LALL).

This sequence belongs to the complex I subunit 4L family. As to quaternary structure, NDH-1 is composed of 14 different subunits. Subunits NuoA, H, J, K, L, M, N constitute the membrane sector of the complex.

The protein localises to the cell membrane. It catalyses the reaction a quinone + NADH + 5 H(+)(in) = a quinol + NAD(+) + 4 H(+)(out). Its function is as follows. NDH-1 shuttles electrons from NADH, via FMN and iron-sulfur (Fe-S) centers, to quinones in the respiratory chain. The immediate electron acceptor for the enzyme in this species is believed to be ubiquinone. Couples the redox reaction to proton translocation (for every two electrons transferred, four hydrogen ions are translocated across the cytoplasmic membrane), and thus conserves the redox energy in a proton gradient. The chain is NADH-quinone oxidoreductase subunit K from Baumannia cicadellinicola subsp. Homalodisca coagulata.